A 723-amino-acid chain; its full sequence is Nicastrin (723 aa).

The first 16 residues, Met1–Cys16, serve as a signal peptide directing secretion. The Extracellular segment spans residues Asp17–Asp678. N-linked (GlcNAc...) asparagine glycans are attached at residues Asn40, Asn181, Asn271, Asn328, Asn409, and Asn627. The helical transmembrane segment at Ala679 to Ala699 threads the bilayer. At Val700–Leu723 the chain is on the cytoplasmic side.

It belongs to the nicastrin family. Component of the gamma-secretase complex, a complex probably composed of the presenilin homodimer (sel-12, hop-1 or spe-4), nicastrin (aph-2), aph-1 and pen-2.

It localises to the membrane. Essential subunit of the gamma-secretase complex, an endoprotease complex that catalyzes the intramembrane cleavage of integral membrane proteins such as Notch (glp-1 or lin-12). It may represents a stabilizing cofactor required for the assembly of the gamma-secretase complex. This chain is Nicastrin (aph-2), found in Caenorhabditis elegans.